Here is a 300-residue protein sequence, read N- to C-terminus: Protein orai (300 aa).

Over 1–128 the chain is Cytoplasmic; that stretch reads MPRSHDPSRV…SKAQLKASSR (128 aa). Residues 58-82 are disordered; the sequence is QPPSSGGGSRNVGGGDGAAGNSKNG. Positions 62–75 are enriched in gly residues; the sequence is SGGGSRNVGGGDGA. Residues 129–146 traverse the membrane as a helical segment; that stretch reads TSALLAGFAMVCLVELQY. The Extracellular portion of the chain corresponds to 147-153; sequence DDSTSKP. Residues 154 to 174 form a helical membrane-spanning segment; it reads LLIVLGVVTSLLVSVHLLALM. The Cytoplasmic segment spans residues 175–205; sequence MSTCILPYMEATGCTQDSPHLKLKFYIDLSW. A helical membrane pass occupies residues 206 to 226; it reads LFSTCIGLLLFLVEIGVIFYV. At 227–237 the chain is on the extracellular side; that stretch reads KFTAVGYPTAG. A helical transmembrane segment spans residues 238 to 258; it reads YITTAMLIPVGIVFVLFSYLI. Over 259-300 the chain is Cytoplasmic; that stretch reads HKNRVSHSLGRFKDKVDTMKQFLDVEANLQKSTIAPSTIRDI.

This sequence belongs to the Orai family.

It localises to the membrane. Ca(2+) release-activated Ca(2+)-like (CRAC-like) channel subunit which mediates Ca(2+) influx and increase in Ca(2+)-selective current by synergy with the Ca(2+) sensor, stim-1. Required for Ca(2+) and IP3-dependent contractile activity of sheath cells and the spermatheca. Affects brood size and somatic cell function. The polypeptide is Protein orai (orai-1) (Caenorhabditis briggsae).